A 117-amino-acid chain; its full sequence is Protein YchN (117 aa).

To M.jannaschii MJ0989. Homohexamer. The hexamer is formed by a dimer of trimers.

The sequence is that of Protein YchN (ychN) from Escherichia coli O157:H7.